The chain runs to 631 residues: Guanylate-binding protein 4 (631 aa).

Positions 33–283 (SQPVVVVAIV…FASYIFTYAK (251 aa)) constitute a GB1/RHD3-type G domain. GTP-binding positions include 43–50 (GWSHTGKS) and 103–107 (DTEGL). Residues 492-592 (IAEKHTKKEA…GHNIKEMKQN (101 aa)) adopt a coiled-coil conformation.

Belongs to the TRAFAC class dynamin-like GTPase superfamily. GB1/RHD3 GTPase family. GB1 subfamily. In terms of assembly, heterodimer with other family members, including GBP1, GBP2 and GBP5. Dimerization regulates subcellular location. Interacts with IRF7; preventing interaction between TRAF6 and IRF7, resulting in impaired TRAF6-mediated IRF7 ubiquitination. As to expression, mainly expressed in organs of the immune system, such as spleen and lymph nodes.

The protein localises to the golgi apparatus membrane. It localises to the cytoplasm. The protein resides in the nucleus. It is found in the perinuclear region. It catalyses the reaction GTP + H2O = GDP + phosphate + H(+). Interferon (IFN)-inducible GTPase that plays important roles in innate immunity against a diverse range of bacterial, viral and protozoan pathogens. Negatively regulates the antiviral response by inhibiting activation of IRF7 transcription factor. This chain is Guanylate-binding protein 4, found in Mus musculus (Mouse).